A 315-amino-acid polypeptide reads, in one-letter code: Peroxidase 4 (315 aa).

A signal peptide spans 1–19; it reads MAIFKILVLLLSLCCFSQA. Q20 is subject to Pyrrolidone carboxylic acid. Cystine bridges form between C30–C110, C63–C68, C116–C311, and C195–C221. H61 acts as the Proton acceptor in catalysis. Ca(2+) contacts are provided by D62, V65, G67, D69, and S71. Residue P158 coordinates substrate. Residue H188 participates in heme b binding. T189 is a Ca(2+) binding site. N-linked (GlcNAc...) asparagine glycosylation is present at N205. Positions 234, 237, and 242 each coordinate Ca(2+).

It belongs to the peroxidase family. Classical plant (class III) peroxidase subfamily. Heme b is required as a cofactor. Requires Ca(2+) as cofactor.

Its subcellular location is the secreted. The catalysed reaction is 2 a phenolic donor + H2O2 = 2 a phenolic radical donor + 2 H2O. Removal of H(2)O(2), oxidation of toxic reductants, biosynthesis and degradation of lignin, suberization, auxin catabolism, response to environmental stresses such as wounding, pathogen attack and oxidative stress. These functions might be dependent on each isozyme/isoform in each plant tissue. The chain is Peroxidase 4 (PER4) from Arabidopsis thaliana (Mouse-ear cress).